We begin with the raw amino-acid sequence, 370 residues long: Ubiquinone biosynthesis O-methyltransferase, mitochondrial (370 aa).

The transit peptide at 1-86 directs the protein to the mitochondrion; that stretch reads MWRGGRLGSR…TYRTPWKRLY (86 aa). Arg125 contacts S-adenosyl-L-methionine. N6-acetyllysine is present on residues Lys144 and Lys150. Positions 155 and 176 each coordinate S-adenosyl-L-methionine. Lys197 carries the N6-acetyllysine modification. Residue Ser223 coordinates S-adenosyl-L-methionine. Residues Glu224, Glu227, and His228 each contribute to the Mg(2+) site. Residues 336–370 form a disordered region; that stretch reads AQEHQEPAESALKGETGALHANTSGSPSVREEQRT.

It belongs to the class I-like SAM-binding methyltransferase superfamily. UbiG/COQ3 family. In terms of assembly, component of a multi-subunit COQ enzyme complex, composed of at least COQ3, COQ4, COQ5, COQ6, COQ7 and COQ9. Requires Mg(2+) as cofactor.

It localises to the mitochondrion inner membrane. It catalyses the reaction 3,4-dihydroxy-5-(all-trans-decaprenyl)benzoate + S-adenosyl-L-methionine = 4-hydroxy-3-methoxy-5-(all-trans-decaprenyl)benzoate + S-adenosyl-L-homocysteine + H(+). It carries out the reaction a 3-demethylubiquinone + S-adenosyl-L-methionine = a ubiquinone + S-adenosyl-L-homocysteine. The enzyme catalyses 3-demethylubiquinol-10 + S-adenosyl-L-methionine = ubiquinol-10 + S-adenosyl-L-homocysteine + H(+). The protein operates within cofactor biosynthesis; ubiquinone biosynthesis. Its function is as follows. O-methyltransferase required for two non-consecutive steps during ubiquinone biosynthesis. Catalyzes the 2 O-methylation of 3,4-dihydroxy-5-(all-trans-decaprenyl)benzoic acid into 4-hydroxy-3-methoxy-5-(all-trans-decaprenyl)benzoic acid. Also catalyzes the last step of ubiquinone biosynthesis by mediating methylation of 3-demethylubiquinone into ubiquinone. Also able to mediate the methylation of 3-demethylubiquinol-10 into ubiquinol-10. The sequence is that of Ubiquinone biosynthesis O-methyltransferase, mitochondrial from Mus musculus (Mouse).